Here is a 423-residue protein sequence, read N- to C-terminus: Haloacid dehalogenase-like hydrolase domain-containing 5 (423 aa).

A signal peptide spans 1-23 (MAAWGCVAALGAARGLCWRAARA).

Belongs to the HAD-like hydrolase superfamily. As to expression, widely expressed.

This chain is Haloacid dehalogenase-like hydrolase domain-containing 5, found in Homo sapiens (Human).